The sequence spans 352 residues: Holliday junction branch migration complex subunit RuvB (352 aa).

The large ATPase domain (RuvB-L) stretch occupies residues 5-191; the sequence is TDDFSEQRVI…FGIVARLEFY (187 aa). ATP contacts are provided by residues Leu-30, Arg-31, Gly-72, Lys-75, Thr-76, Thr-77, 138–140, Arg-181, Tyr-191, and Arg-228; that span reads EDY. Thr-76 is a binding site for Mg(2+). The tract at residues 192-262 is small ATPAse domain (RuvB-S); that stretch reads TPLELTRIVT…MADAALVMLD (71 aa). A head domain (RuvB-H) region spans residues 265 to 352; it reads PVGFDVMDRK…GPNGELWGGQ (88 aa). DNA contacts are provided by Arg-301, Arg-320, and Arg-325.

This sequence belongs to the RuvB family. Homohexamer. Forms an RuvA(8)-RuvB(12)-Holliday junction (HJ) complex. HJ DNA is sandwiched between 2 RuvA tetramers; dsDNA enters through RuvA and exits via RuvB. An RuvB hexamer assembles on each DNA strand where it exits the tetramer. Each RuvB hexamer is contacted by two RuvA subunits (via domain III) on 2 adjacent RuvB subunits; this complex drives branch migration. In the full resolvosome a probable DNA-RuvA(4)-RuvB(12)-RuvC(2) complex forms which resolves the HJ.

Its subcellular location is the cytoplasm. The enzyme catalyses ATP + H2O = ADP + phosphate + H(+). In terms of biological role, the RuvA-RuvB-RuvC complex processes Holliday junction (HJ) DNA during genetic recombination and DNA repair, while the RuvA-RuvB complex plays an important role in the rescue of blocked DNA replication forks via replication fork reversal (RFR). RuvA specifically binds to HJ cruciform DNA, conferring on it an open structure. The RuvB hexamer acts as an ATP-dependent pump, pulling dsDNA into and through the RuvAB complex. RuvB forms 2 homohexamers on either side of HJ DNA bound by 1 or 2 RuvA tetramers; 4 subunits per hexamer contact DNA at a time. Coordinated motions by a converter formed by DNA-disengaged RuvB subunits stimulates ATP hydrolysis and nucleotide exchange. Immobilization of the converter enables RuvB to convert the ATP-contained energy into a lever motion, pulling 2 nucleotides of DNA out of the RuvA tetramer per ATP hydrolyzed, thus driving DNA branch migration. The RuvB motors rotate together with the DNA substrate, which together with the progressing nucleotide cycle form the mechanistic basis for DNA recombination by continuous HJ branch migration. Branch migration allows RuvC to scan DNA until it finds its consensus sequence, where it cleaves and resolves cruciform DNA. The protein is Holliday junction branch migration complex subunit RuvB of Herminiimonas arsenicoxydans.